A 464-amino-acid polypeptide reads, in one-letter code: L-cystine uptake protein TcyP (464 aa).

Helical transmembrane passes span 3-23, 34-54, 73-93, 107-127, 184-204, 225-245, 263-283, 347-367, 371-391, and 395-415; these read TLLV…LYYM, VFTA…IYEP, YVKL…ISAF, GLII…GIAA, PTST…FIGV, IVMR…LALM, FVLA…LLIA, AGIY…IDPL, FILT…GVGG, and FAAL…ALVI.

This sequence belongs to the dicarboxylate/amino acid:cation symporter (DAACS) (TC 2.A.23) family.

The protein resides in the membrane. Its function is as follows. Mediates uptake of L-cystine, the oxidized form of L-cysteine. This is L-cystine uptake protein TcyP from Bacillus cereus (strain ATCC 14579 / DSM 31 / CCUG 7414 / JCM 2152 / NBRC 15305 / NCIMB 9373 / NCTC 2599 / NRRL B-3711).